The chain runs to 1257 residues: Phosphatidylinositol 3,4,5-trisphosphate 5-phosphatase 2 (1257 aa).

The region spanning 21 to 117 (WYHRDLSRAA…GLVCALLLPV (97 aa)) is the SH2 domain. Residues 119-132 (GEREPDPPDDRDAS) show a composition bias toward basic and acidic residues. Residues 119-181 (GEREPDPPDD…ESTPNGLSTV (63 aa)) form a disordered region. At S132 the chain carries Phosphoserine. Residues 156–166 (PSSPLPTPETP) show a composition bias toward pro residues. A Phosphothreonine modification is found at T165. Residues S241 and S353 each carry the phosphoserine modification. Y887 is subject to Phosphotyrosine. S891 is modified (phosphoserine). The segment at 897–986 (TGAKSKVPSV…PPKNSFNNPA (90 aa)) is disordered. A compositionally biased stretch (pro residues) spans 939 to 951 (PPPTGRPPAPPRA). Positions 945–950 (PPAPPR) match the SH3-binding motif. Residues 952–966 (VPREEPLNPRLKSEG) show a composition bias toward basic and acidic residues. Positions 984–987 (NPAY) match the NPXY motif motif. Y987 carries the post-translational modification Phosphotyrosine. Residues 999–1008 (PLEPPSLARA) show a composition bias toward low complexity. Residues 999–1119 (PLEPPSLARA…FLGEVASGDD (121 aa)) are disordered. 2 stretches are compositionally biased toward pro residues: residues 1049 to 1060 (LPPPDFPPPPLP) and 1088 to 1104 (GPPPPKAHPRPPLPPGT). S1132 bears the Phosphoserine mark. Positions 1134-1196 (VDYAPGPGRS…PQGGRASGLG (63 aa)) are disordered. Y1136 and Y1161 each carry phosphotyrosine. In terms of domain architecture, SAM spans 1195 to 1257 (LGEAGMGAWL…LLLDTLQLSK (63 aa)). A Phosphoserine modification is found at S1256.

This sequence belongs to the inositol 1,4,5-trisphosphate 5-phosphatase family. As to quaternary structure, interacts with tyrosine phosphorylated form of SHC1. Interacts with EGFR. Upon stimulation by the EGF signaling pathway, it forms a complex with SHC1 and EGFR. Interacts with cytoskeletal protein SORBS3/vinexin, promoting its localization to the periphery of cells. Forms a complex with filamin (FLNA or FLNB), actin, GPIb (GP1BA or GP1BB) that regulates cortical and submembraneous actin. Interacts with c-Met/MET, when c-Met/MET is phosphorylated on 'Tyr-1356'. Interacts with p130Cas/BCAR1. Interacts with CENTD3/ARAP3 via its SAM domain. Interacts with c-Cbl/CBL and CAP/SORBS1. Interacts with activated EPHA2 receptor. Interacts with receptors FCGR2A. Interacts with FCGR2B. Interacts with tyrosine kinase ABL1. Interacts with tyrosine kinase TEC. Interacts with CSF1R. Interacts (via N-terminus) with SH3YL1 (via SH3 domain). Interacts (via SH2 domain) with tyrosine phosphorylated KLRC1 (via ITIM). Interacts with NEDD9/HEF1. Post-translationally, tyrosine phosphorylated by the members of the SRC family after exposure to a diverse array of extracellular stimuli such as insulin, growth factors such as EGF or PDGF, chemokines, integrin ligands and hypertonic and oxidative stress. May be phosphorylated upon IgG receptor FCGR2B-binding. Phosphorylated at Tyr-987 following cell attachment and spreading. Phosphorylated at Tyr-1161 following EGF signaling pathway stimulation. In terms of tissue distribution, widely expressed.

It localises to the cytoplasm. Its subcellular location is the cytosol. It is found in the cytoskeleton. The protein resides in the membrane. The protein localises to the cell projection. It localises to the filopodium. Its subcellular location is the lamellipodium. It is found in the basal cell membrane. The protein resides in the nucleus. The protein localises to the nucleus speckle. It localises to the spindle pole. The enzyme catalyses a 1,2-diacyl-sn-glycero-3-phospho-(1D-myo-inositol-3,4,5-trisphosphate) + H2O = a 1,2-diacyl-sn-glycero-3-phospho-(1D-myo-inositol-3,4-bisphosphate) + phosphate. It catalyses the reaction 1,2-dioctanoyl-sn-glycero-3-phospho-(1D-myo-inositol-3,4,5-trisphosphate) + H2O = 1,2-dioctanoyl-sn-glycero-3-phospho-(1D-myo-inositol-3,4-bisphosphate) + phosphate. The catalysed reaction is 1,2-dihexadecanoyl-sn-glycero-3-phospho-(1D-myo-inositol-3,4,5-trisphosphate) + H2O = 1,2-dihexadecanoyl-sn-glycero-3-phospho-(1D-myo-inositol-3,4-bisphosphate) + phosphate. Its activity is regulated as follows. Activated upon translocation to the sites of synthesis of PtdIns(3,4,5)P3 in the membrane. Enzymatic activity is enhanced in the presence of phosphatidylserine. Functionally, phosphatidylinositol (PtdIns) phosphatase that specifically hydrolyzes the 5-phosphate of phosphatidylinositol-3,4,5-trisphosphate (PtdIns(3,4,5)P3) to produce PtdIns(3,4)P2, thereby negatively regulating the PI3K (phosphoinositide 3-kinase) pathways. Required for correct mitotic spindle orientation and therefore progression of mitosis. Plays a central role in regulation of PI3K-dependent insulin signaling, although the precise molecular mechanisms and signaling pathways remain unclear. While overexpression reduces both insulin-stimulated MAP kinase and Akt activation, its absence does not affect insulin signaling or GLUT4 trafficking. Confers resistance to dietary obesity. May act by regulating AKT2, but not AKT1, phosphorylation at the plasma membrane. Part of a signaling pathway that regulates actin cytoskeleton remodeling. Required for the maintenance and dynamic remodeling of actin structures as well as in endocytosis, having a major impact on ligand-induced EGFR internalization and degradation. Participates in regulation of cortical and submembraneous actin by hydrolyzing PtdIns(3,4,5)P3 thereby regulating membrane ruffling. Regulates cell adhesion and cell spreading. Required for HGF-mediated lamellipodium formation, cell scattering and spreading. Acts as a negative regulator of EPHA2 receptor endocytosis by inhibiting via PI3K-dependent Rac1 activation. Acts as a regulator of neuritogenesis by regulating PtdIns(3,4,5)P3 level and is required to form an initial protrusive pattern, and later, maintain proper neurite outgrowth. Acts as a negative regulator of the FC-gamma-RIIA receptor (FCGR2A). Mediates signaling from the FC-gamma-RIIB receptor (FCGR2B), playing a central role in terminating signal transduction from activating immune/hematopoietic cell receptor systems. Upon stimulation by EGF, it is recruited by EGFR and dephosphorylates PtdIns(3,4,5)P3. Plays a negative role in regulating the PI3K-PKB pathway, possibly by inhibiting PKB activity. Down-regulates Fc-gamma-R-mediated phagocytosis in macrophages independently of INPP5D/SHIP1. In macrophages, down-regulates NF-kappa-B-dependent gene transcription by regulating macrophage colony-stimulating factor (M-CSF)-induced signaling. Plays a role in the localization of AURKA and NEDD9/HEF1 to the basolateral membrane at interphase in polarized cysts, thereby mediates cell cycle homeostasis, cell polarization and cilia assembly. Additionally promotion of cilia growth is also facilitated by hydrolysis of (PtdIns(3,4,5)P3) to PtdIns(3,4)P2. Promotes formation of apical membrane-initiation sites during the initial stages of lumen formation via Rho family-induced actin filament organization and CTNNB1 localization to cell-cell contacts. May also hydrolyze PtdIns(1,3,4,5)P4, and could thus affect the levels of the higher inositol polyphosphates like InsP6. Involved in endochondral ossification. The chain is Phosphatidylinositol 3,4,5-trisphosphate 5-phosphatase 2 from Mus musculus (Mouse).